The primary structure comprises 213 residues: MKALKIALTKGRLEKDAVALLEKAGIDCSSMTDKKRKLIFHSSTQPISFILVKAVDVMTYVKHGVADIGIVGKDVLMEASKSHYEMLDLEIGKCQFCLASTPDFDPSSYRRKIIATKYPTVASKFFREKGEDVEIIKIEGSVEIAPVLDLADAIIDIVETGSTLKENGLIIYEKMYPISARLIVNKASLKQNKTQIFHLIDQLEQAIKEELAE.

It belongs to the ATP phosphoribosyltransferase family. Short subfamily. Heteromultimer composed of HisG and HisZ subunits.

The protein resides in the cytoplasm. It catalyses the reaction 1-(5-phospho-beta-D-ribosyl)-ATP + diphosphate = 5-phospho-alpha-D-ribose 1-diphosphate + ATP. The protein operates within amino-acid biosynthesis; L-histidine biosynthesis; L-histidine from 5-phospho-alpha-D-ribose 1-diphosphate: step 1/9. Its function is as follows. Catalyzes the condensation of ATP and 5-phosphoribose 1-diphosphate to form N'-(5'-phosphoribosyl)-ATP (PR-ATP). Has a crucial role in the pathway because the rate of histidine biosynthesis seems to be controlled primarily by regulation of HisG enzymatic activity. The polypeptide is ATP phosphoribosyltransferase (hisG) (Listeria monocytogenes serovar 1/2a (strain ATCC BAA-679 / EGD-e)).